A 254-amino-acid chain; its full sequence is Large ribosomal subunit protein uL2 (254 aa).

The protein belongs to the universal ribosomal protein uL2 family.

The chain is Large ribosomal subunit protein uL2 (RPL2) from Candida glabrata (strain ATCC 2001 / BCRC 20586 / JCM 3761 / NBRC 0622 / NRRL Y-65 / CBS 138) (Yeast).